The sequence spans 341 residues: Ketol-acid reductoisomerase (NADP(+)) (341 aa).

The KARI N-terminal Rossmann domain occupies 3–184 (LKVYYDKDCD…GGGRSGIIET (182 aa)). NADP(+) is bound by residues 26–29 (FGSQ), Ser54, and 84–87 (DELQ). The active site involves His109. Gly135 is a binding site for NADP(+). Positions 185-330 (TFKDETETDL…GRLRAMMPWI (146 aa)) constitute a KARI C-terminal knotted domain. Asp193, Glu197, Glu229, and Glu233 together coordinate Mg(2+). Position 254 (Ser254) interacts with substrate.

The protein belongs to the ketol-acid reductoisomerase family. Mg(2+) is required as a cofactor.

It catalyses the reaction (2R)-2,3-dihydroxy-3-methylbutanoate + NADP(+) = (2S)-2-acetolactate + NADPH + H(+). The catalysed reaction is (2R,3R)-2,3-dihydroxy-3-methylpentanoate + NADP(+) = (S)-2-ethyl-2-hydroxy-3-oxobutanoate + NADPH + H(+). It participates in amino-acid biosynthesis; L-isoleucine biosynthesis; L-isoleucine from 2-oxobutanoate: step 2/4. Its pathway is amino-acid biosynthesis; L-valine biosynthesis; L-valine from pyruvate: step 2/4. In terms of biological role, involved in the biosynthesis of branched-chain amino acids (BCAA). Catalyzes an alkyl-migration followed by a ketol-acid reduction of (S)-2-acetolactate (S2AL) to yield (R)-2,3-dihydroxy-isovalerate. In the isomerase reaction, S2AL is rearranged via a Mg-dependent methyl migration to produce 3-hydroxy-3-methyl-2-ketobutyrate (HMKB). In the reductase reaction, this 2-ketoacid undergoes a metal-dependent reduction by NADPH to yield (R)-2,3-dihydroxy-isovalerate. The protein is Ketol-acid reductoisomerase (NADP(+)) of Helicobacter hepaticus (strain ATCC 51449 / 3B1).